Consider the following 125-residue polypeptide: Subtelomeric hrmA-associated cluster protein cgnA (125 aa).

23 G-Q-I/R/S repeats span residues 11–13, 14–16, 17–19, 20–22, 23–25, 26–28, 29–31, 32–34, 35–37, 38–40, 41–43, 44–46, 47–49, 50–52, 53–55, 56–58, 59–61, 62–64, 65–67, 68–70, 71–73, 74–76, and 77–79; these read GQI, GPI, GQR, GQS, and GQA. A 23 X 3 AA approximate tandem repeats of G-Q-I/R/S region spans residues 11-79; sequence GQIGPIGQRG…IGQIGQIGQA (69 aa). Residues 15 to 57 form a disordered region; the sequence is PIGQRGQSGQRGQSGQRGQSGQIGQSGQSGQSGQSGQSGQIGQ.

Its subcellular location is the secreted. Its function is as follows. Hypoxia responsive morphology factor that modulates the expression of the subtelomeric hrmA-associated cluster (HAC) containing genes that alter the hyphal surface (such as reduced total chitin or increased beta-glucan exposure) and perturb inter-hyphal interactions within the developing biofilms, resulting in a loss of vertically aligned polarized growing filaments. Consequently, this hypoxia-typic morphotype (called H-MORPH) with altered biofilm architecture leads to increased hypoxia fitness, increased host inflammation, rapid disease progression, and mortality in a murine model of invasive aspergillosis. GcnA is directly involved in the reduction total surface chitin and the increase beta-glucan exposure, and mediates the detachment of the extracellular matrix and especially of its component galactosaminogalactan (GAG). The sequence is that of Subtelomeric hrmA-associated cluster protein cgnA from Aspergillus fumigatus (strain CBS 144.89 / FGSC A1163 / CEA10) (Neosartorya fumigata).